A 142-amino-acid chain; its full sequence is Putative pre-16S rRNA nuclease (142 aa).

Belongs to the YqgF nuclease family.

It is found in the cytoplasm. Its function is as follows. Could be a nuclease involved in processing of the 5'-end of pre-16S rRNA. The sequence is that of Putative pre-16S rRNA nuclease from Staphylococcus epidermidis (strain ATCC 35984 / DSM 28319 / BCRC 17069 / CCUG 31568 / BM 3577 / RP62A).